We begin with the raw amino-acid sequence, 474 residues long: Recombinase Flp protein (474 aa).

The Tyr recombinase Flp-type domain occupies 135 to 421 (LSNNVGAEIS…LYLYTYAQQK (287 aa)). Catalysis depends on Tyr342, which acts as the O-(3'-phospho-DNA)-tyrosine intermediate. The tract at residues 426–474 (ADPNEQNRLFSSESPAHPFLTPQSTGSSTPLTWTAPKTLSTGLMTPGEE) is disordered. 2 stretches are compositionally biased toward polar residues: residues 429–439 (NEQNRLFSSES) and 446–468 (TPQSTGSSTPLTWTAPKTLSTGL).

It belongs to the 'phage' integrase family.

Catalyzes the recombination between the large inverted repetitions of the plasmid. In Zygosaccharomyces bailii, this protein is Recombinase Flp protein.